The following is a 431-amino-acid chain: Keratin, type I cytoskeletal 18 (431 aa).

A head region spans residues 2 to 83 (SLRTSYSVRS…SGSTGEIMGN (82 aa)). Phosphoserine is present on S12. T13 carries the phosphothreonine modification. Phosphoserine is present on residues S22 and S36. Residues 84–119 (EKMAMQNLNDRLASYLEKVRILEQANSKLELKIREA) are coil 1A. The region spanning 84 to 395 (EKMAMQNLND…RLLDGGDFKL (312 aa)) is the IF rod domain. The linker 1 stretch occupies residues 120–136 (LEKRGPDVHDYSRFQPI). Residues 137-228 (VDELRKKIFD…KNHDNEVMEL (92 aa)) form a coil 1B region. The linker 12 stretch occupies residues 229-252 (RNQISQSGVQVDVDAPKGQDLSQI). Positions 253 to 390 (MEEIRAKYEK…IATYRRLLDG (138 aa)) are coil 2. The tract at residues 391–431 (GDFKLQDALEEQKKVKVMTVTQTLVDGKVVSSSTETKERKL) is tail.

The protein belongs to the intermediate filament family. In terms of assembly, heterotetramer of two type I and two type II keratins. Keratin-18 associates with keratin-8. Post-translationally, proteolytically cleaved by caspases during epithelial cell apoptosis. Expressed in simple epithelia such as intestinal mucosa, bile duct, hepatocytes, renal tubules, endothelia, ocular lens epithelium, and in a variety of mesenchymally-derived cells such as blood vessel endothelia, pillar gill cells, optic nerve glial cells, fibroblasts, interstitial cells, chondrocytes and ovarian theca cells. Also expressed in epidermis, pharyngeal mucosa, mucosa of anterior esophagus, gill mucosa and cornea.

Its function is as follows. When phosphorylated, plays a role in filament reorganization. This Danio rerio (Zebrafish) protein is Keratin, type I cytoskeletal 18.